The sequence spans 263 residues: MPTSIKAIKESLEAVTSLLDPLFQELATDTRSGVQKALKSRQKVIQAELAEEERLEAMLSYEKALYKKGYKAIAGIDEVGRGPLAGPVVAACVILPKYCKIKGLNDSKKIPKAKHETIYQAVKEKALAIGIGIIDNQLIDEVNIYEATKLAMLEAIKQLEGQLTQPDYLLIDAMTLDIAISQQSILKGDANSLSIAAASIVAKVTRDQMMANYDRIFPGYDFAKNAGYGTKEHLQGLKAYGITPIHRKSFEPVKSMCCDSTNP.

An RNase H type-2 domain is found at 71–262 (KAIAGIDEVG…VKSMCCDSTN (192 aa)). A divalent metal cation contacts are provided by Asp-77, Glu-78, and Asp-172.

This sequence belongs to the RNase HII family. The cofactor is Mn(2+). It depends on Mg(2+) as a cofactor.

It localises to the cytoplasm. It catalyses the reaction Endonucleolytic cleavage to 5'-phosphomonoester.. Endonuclease that specifically degrades the RNA of RNA-DNA hybrids. This is Ribonuclease HII from Streptococcus pyogenes serotype M1.